A 66-amino-acid polypeptide reads, in one-letter code: MVAKQRIRMANEKHSKNITQRGNVAKTSRNAPEEKASVGPWLLALFIFVVCGSAIFQIIQSIRMGM.

The segment at Met-1–Ala-31 is disordered. Polar residues predominate over residues Asn-17 to Asn-30. The helical transmembrane segment at Gly-39–Ile-59 threads the bilayer.

Belongs to the RAMP4 family. As to quaternary structure, interacts with SEC61B, SEC61A1 and the SEC61 complex. Interacts with CANX.

The protein resides in the membrane. Its subcellular location is the endoplasmic reticulum membrane. Interacts with target proteins during their translocation into the lumen of the endoplasmic reticulum. Protects unfolded target proteins against degradation during ER stress. May facilitate glycosylation of target proteins after termination of ER stress. May modulate the use of N-glycosylation sites on target proteins. The polypeptide is Stress-associated endoplasmic reticulum protein 1 (SERP1) (Bos taurus (Bovine)).